Here is a 480-residue protein sequence, read N- to C-terminus: Glutarate-semialdehyde dehydrogenase (480 aa).

NADP(+)-binding positions include 156–157, 180–183, and 233–234; these read WN, KPAS, and GS. Residue E255 is the Proton acceptor of the active site. L256 serves as a coordination point for NADP(+). Residue C289 is the Nucleophile of the active site. Position 384 (E384) interacts with NADP(+).

Belongs to the aldehyde dehydrogenase family.

It catalyses the reaction 5-oxopentanoate + NADP(+) + H2O = glutarate + NADPH + 2 H(+). The protein operates within amino-acid degradation. Catalyzes the conversion of 5-oxopentanoate (glutarate semialdehyde) to glutarate. Involved in L-lysine degradation. In Pseudomonas putida (strain ATCC 47054 / DSM 6125 / CFBP 8728 / NCIMB 11950 / KT2440), this protein is Glutarate-semialdehyde dehydrogenase.